The sequence spans 294 residues: Glyceraldehyde-3-phosphate dehydrogenase (294 aa).

Residues D19, R63, and T105 each coordinate NAD(+). D-glyceraldehyde 3-phosphate-binding positions include 134 to 136 (SCT) and T165. Catalysis depends on C135, which acts as the Nucleophile. At K177 the chain carries N6-acetyllysine. D-glyceraldehyde 3-phosphate is bound by residues 194–195 (TG) and R217. N6-acetyllysine is present on K234.

Belongs to the glyceraldehyde-3-phosphate dehydrogenase family. Homotetramer.

Its subcellular location is the cytoplasm. It carries out the reaction D-glyceraldehyde 3-phosphate + phosphate + NAD(+) = (2R)-3-phospho-glyceroyl phosphate + NADH + H(+). It participates in carbohydrate degradation; glycolysis; pyruvate from D-glyceraldehyde 3-phosphate: step 1/5. Functionally, catalyzes the oxidative phosphorylation of glyceraldehyde 3-phosphate (G3P) to 1,3-bisphosphoglycerate (BPG) using the cofactor NAD. The first reaction step involves the formation of a hemiacetal intermediate between G3P and a cysteine residue, and this hemiacetal intermediate is then oxidized to a thioester, with concomitant reduction of NAD to NADH. The reduced NADH is then exchanged with the second NAD, and the thioester is attacked by a nucleophilic inorganic phosphate to produce BPG. The sequence is that of Glyceraldehyde-3-phosphate dehydrogenase (gap) from Pseudescherichia vulneris (Escherichia vulneris).